The chain runs to 334 residues: Leukocyte cell-derived chemotaxin 1 (334 aa).

The helical transmembrane segment at 46–66 (VVLISGAVLLLFGAIGAFYFW) threads the bilayer. The 97-residue stretch at 105 to 201 (GSGAEEAIEV…FCGDLPIFWL (97 aa)) folds into the BRICHOS domain. Cys-132 and Cys-193 are joined by a disulfide. A propeptide spanning residues 211 to 214 (RERR) is cleaved from the precursor. The interval 212 to 268 (ERREVVRSSAPSTTRRPHSEPRGNAGPGRLSNRTRPSVQDDEEPFNPDNPYHQQEGE) is disordered. Asn-243 carries N-linked (GlcNAc...) asparagine glycosylation. Disulfide bonds link Cys-282-Cys-286, Cys-283-Cys-323, Cys-293-Cys-317, and Cys-297-Cys-313.

Belongs to the chondromodulin-1 family. After cleavage, the post-translationally modified ChM-I is secreted as a glycoprotein. In terms of tissue distribution, detected in cartilage, cardiac valves and valvular interstitial cells (at protein level). Expressed in eye.

It is found in the secreted. Its subcellular location is the extracellular space. The protein localises to the extracellular matrix. The protein resides in the endomembrane system. Its function is as follows. Bifunctional growth regulator that stimulates the growth of cultured chondrocytes in the presence of basic fibroblast growth factor (FGF) but inhibits the growth of cultured vascular endothelial cells. May contribute to the rapid growth of cartilage and vascular invasion prior to the replacement of cartilage by bone during endochondral bone development. Inhibits in vitro tube formation and mobilization of endothelial cells. Plays a role as antiangiogenic factor in cardiac valves to suppress neovascularization. This is Leukocyte cell-derived chemotaxin 1 from Rattus norvegicus (Rat).